A 279-amino-acid chain; its full sequence is uncharacterized protein (279 aa).

The next 3 helical transmembrane spans lie at 1 to 21, 38 to 58, and 131 to 151; these read MGFIKSTLLATVTVFVGLCGI, FACHTFLAISSAYGVIASVVA, and SLRYVPILGWFMILSDVVFID.

Belongs to the 1-acyl-sn-glycerol-3-phosphate acyltransferase family.

Its subcellular location is the endoplasmic reticulum membrane. This is an uncharacterized protein from Schizosaccharomyces pombe (strain 972 / ATCC 24843) (Fission yeast).